The sequence spans 322 residues: Serine protease Lpg1137 (322 aa).

Residue Ser-68 is part of the active site.

It localises to the secreted. The protein localises to the host mitochondrion membrane. Serine protease effector that inhibits host cell autophagy by targeting SNX17. Localizes to the host endoplasmic reticulum-mitochondria contact site and catalyzes degradation of host SNX17, thereby impairing endoplasmic reticulum-mitochondria communication, leading to inhibit autophagy as well as staurosporine-induced apoptosis. This is Serine protease Lpg1137 from Legionella pneumophila subsp. pneumophila (strain Philadelphia 1 / ATCC 33152 / DSM 7513).